Reading from the N-terminus, the 357-residue chain is Arginine kinase Pro c 2.0101 (357 aa).

A Phosphagen kinase N-terminal domain is found at 9–91 (KLEEGFKKLE…FDPIIEDYHK (83 aa)). 64–68 (GVGIY) serves as a coordination point for L-arginine. Residues 119–356 (FVISTRVRCG…LELIKIEKEM (238 aa)) enclose the Phosphagen kinase C-terminal domain. ATP-binding positions include 122–126 (STRVR) and histidine 185. Glutamate 225 lines the L-arginine pocket. An ATP-binding site is contributed by arginine 229. Residue cysteine 271 participates in L-arginine binding. ATP contacts are provided by residues 280-284 (RASVH) and 309-314 (RGTRGE). Glutamate 314 contributes to the L-arginine binding site.

The protein belongs to the ATP:guanido phosphotransferase family. Post-translationally, glycosylated. As to expression, muscle (at protein level).

The enzyme catalyses L-arginine + ATP = N(omega)-phospho-L-arginine + ADP + H(+). Functionally, catalyzes the reversible transfer of high energy ATP gamma-phosphate group to L-arginine. This Procambarus clarkii (Red swamp crayfish) protein is Arginine kinase Pro c 2.0101.